The sequence spans 241 residues: 1-(5-phosphoribosyl)-5-[(5-phosphoribosylamino)methylideneamino] imidazole-4-carboxamide isomerase (241 aa).

The active-site Proton acceptor is the Asp-8. Asp-130 acts as the Proton donor in catalysis.

It belongs to the HisA/HisF family.

The protein localises to the cytoplasm. It carries out the reaction 1-(5-phospho-beta-D-ribosyl)-5-[(5-phospho-beta-D-ribosylamino)methylideneamino]imidazole-4-carboxamide = 5-[(5-phospho-1-deoxy-D-ribulos-1-ylimino)methylamino]-1-(5-phospho-beta-D-ribosyl)imidazole-4-carboxamide. Its pathway is amino-acid biosynthesis; L-histidine biosynthesis; L-histidine from 5-phospho-alpha-D-ribose 1-diphosphate: step 4/9. The chain is 1-(5-phosphoribosyl)-5-[(5-phosphoribosylamino)methylideneamino] imidazole-4-carboxamide isomerase from Leptospira interrogans serogroup Icterohaemorrhagiae serovar copenhageni (strain Fiocruz L1-130).